The following is a 317-amino-acid chain: Cytochrome c biogenesis protein CcsA (317 aa).

7 consecutive transmembrane segments (helical) span residues 13-35 (ISFSIIAIVITTHLMTLLVHEIV), 44-64 (GMIATFFCITGLLVTRWIYSG), 71-91 (LYESLMFLSWSFSLILMVPYF), 143-163 (MLLSYAALLCGSLLSIALLVI), 171-191 (MIGFTNHLLIWPFSFGEIKYL), 225-245 (VIGLGFTFSTIGILSGAVWAN), and 286-306 (AIVASMGFLIIWICYFGVNLL).

It belongs to the CcmF/CycK/Ccl1/NrfE/CcsA family. In terms of assembly, may interact with Ccs1.

The protein localises to the plastid. The protein resides in the chloroplast thylakoid membrane. In terms of biological role, required during biogenesis of c-type cytochromes (cytochrome c6 and cytochrome f) at the step of heme attachment. The chain is Cytochrome c biogenesis protein CcsA from Illicium oligandrum (Star anise).